The primary structure comprises 196 residues: Imidazole glycerol phosphate synthase subunit HisH (196 aa).

The Glutamine amidotransferase type-1 domain maps to Asn-2–Met-196. Catalysis depends on Cys-77, which acts as the Nucleophile. Residues His-178 and Glu-180 contribute to the active site.

In terms of assembly, heterodimer of HisH and HisF.

It localises to the cytoplasm. The enzyme catalyses 5-[(5-phospho-1-deoxy-D-ribulos-1-ylimino)methylamino]-1-(5-phospho-beta-D-ribosyl)imidazole-4-carboxamide + L-glutamine = D-erythro-1-(imidazol-4-yl)glycerol 3-phosphate + 5-amino-1-(5-phospho-beta-D-ribosyl)imidazole-4-carboxamide + L-glutamate + H(+). The catalysed reaction is L-glutamine + H2O = L-glutamate + NH4(+). The protein operates within amino-acid biosynthesis; L-histidine biosynthesis; L-histidine from 5-phospho-alpha-D-ribose 1-diphosphate: step 5/9. IGPS catalyzes the conversion of PRFAR and glutamine to IGP, AICAR and glutamate. The HisH subunit catalyzes the hydrolysis of glutamine to glutamate and ammonia as part of the synthesis of IGP and AICAR. The resulting ammonia molecule is channeled to the active site of HisF. The sequence is that of Imidazole glycerol phosphate synthase subunit HisH from Shigella dysenteriae serotype 1 (strain Sd197).